A 705-amino-acid chain; its full sequence is Ribosomal RNA large subunit methyltransferase K/L (705 aa).

The 112-residue stretch at 43 to 154 (VVYRCCLWSR…GEKGILGFDL (112 aa)) folds into the THUMP domain.

This sequence belongs to the methyltransferase superfamily. RlmKL family.

It localises to the cytoplasm. It carries out the reaction guanosine(2445) in 23S rRNA + S-adenosyl-L-methionine = N(2)-methylguanosine(2445) in 23S rRNA + S-adenosyl-L-homocysteine + H(+). It catalyses the reaction guanosine(2069) in 23S rRNA + S-adenosyl-L-methionine = N(2)-methylguanosine(2069) in 23S rRNA + S-adenosyl-L-homocysteine + H(+). Functionally, specifically methylates the guanine in position 2445 (m2G2445) and the guanine in position 2069 (m7G2069) of 23S rRNA. This chain is Ribosomal RNA large subunit methyltransferase K/L, found in Aliivibrio fischeri (strain ATCC 700601 / ES114) (Vibrio fischeri).